We begin with the raw amino-acid sequence, 270 residues long: Type II restriction enzyme CeqI (270 aa).

It carries out the reaction Endonucleolytic cleavage of DNA to give specific double-stranded fragments with terminal 5'-phosphates.. Functionally, a P subtype restriction enzyme that recognizes the double-stranded sequence 5'-GATATC-3' and cleaves after T-3. The protein is Type II restriction enzyme CeqI (ceqIR) of Rhodococcus hoagii (Corynebacterium equii).